The following is a 422-amino-acid chain: Serine hydroxymethyltransferase (422 aa).

121-123 (GHI) contributes to the (6S)-5,6,7,8-tetrahydrofolate binding site. An N6-(pyridoxal phosphate)lysine modification is found at Lys227. Glu245 serves as a coordination point for (6S)-5,6,7,8-tetrahydrofolate.

Belongs to the SHMT family. In terms of assembly, homodimer. Pyridoxal 5'-phosphate serves as cofactor.

It is found in the cytoplasm. It carries out the reaction 5,10-methylenetetrahydromethanopterin + glycine + H2O = 5,6,7,8-tetrahydromethanopterin + L-serine. It functions in the pathway amino-acid biosynthesis; glycine biosynthesis; glycine from L-serine: step 1/1. Functionally, catalyzes the reversible interconversion of serine and glycine with tetrahydromethanopterin (H4MPT) serving as the one-carbon carrier. Also exhibits a pteridine-independent aldolase activity toward beta-hydroxyamino acids, producing glycine and aldehydes, via a retro-aldol mechanism. The chain is Serine hydroxymethyltransferase from Methanobrevibacter smithii (strain ATCC 35061 / DSM 861 / OCM 144 / PS).